Consider the following 558-residue polypeptide: Factor VII-activating protease (558 aa).

An N-terminal signal peptide occupies residues 1 to 23 (MSVVMLVFRVLLLIALVGNSAIG). 3 EGF-like domains span residues 71 to 107 (DDDPCQSNPCEHGGDCIIRGNTFSCSCPAPFSGSRCQ), 109 to 146 (VQNKCKDNPCVQGDCLITQTPPYYRCACKYPYTGPDCS), and 148 to 186 (VLPVCRPNPCQNGGVCSRHRRRSRFSCACPDQYKGRFCE). Cystine bridges form between Cys-75–Cys-86, Cys-80–Cys-95, Cys-97–Cys-106, Cys-113–Cys-123, Cys-118–Cys-134, Cys-136–Cys-145, Cys-152–Cys-163, Cys-157–Cys-174, Cys-176–Cys-185, Cys-192–Cys-274, Cys-213–Cys-255, Cys-244–Cys-269, Cys-299–Cys-433, Cys-345–Cys-361, Cys-353–Cys-422, Cys-445–Cys-513, Cys-475–Cys-491, and Cys-503–Cys-531. In terms of domain architecture, Kringle spans 191-274 (DCYVGDGYSY…KWEYCNVEVC (84 aa)). Positions 312 to 553 (IYGGFKSTAG…FLNWIKTTMH (242 aa)) constitute a Peptidase S1 domain. Active-site charge relay system residues include His-360 and Asp-409. Ser-507 functions as the Charge relay system in the catalytic mechanism.

The protein belongs to the peptidase S1 family. In terms of assembly, heterodimer; disulfide-linked. Heterodimer of a 50 kDa heavy and a 27 kDa light chain linked by a disulfide bond. In terms of processing, proteolytic cleavage at Gly-23 or Met-27 can give rise to the 50 kDa heavy chain (HC) and cleavage at Arg-311 or Lys-317 can give rise to the 27 kDa light chain (LC). The HC can undergo further proteolytic cleavage giving rise to a 26 kDa fragment. The LC can undergo further proteolytic cleavage at Arg-311 leading to a 17-kDa fragment and at Arg-478 leading to a 8-kDa fragment.

It localises to the secreted. Cleaves the alpha-chain at multiple sites and the beta-chain between 'Lys-53' and 'Lys-54' but not the gamma-chain of fibrinogen and therefore does not initiate the formation of the fibrin clot and does not cause the fibrinolysis directly. It does not cleave (activate) prothrombin and plasminogen but converts the inactive single chain urinary plasminogen activator (pro-urokinase) to the active two chain form. Activates coagulation factor VII. May function as a tumor suppressor negatively regulating cell proliferation and cell migration. This is Factor VII-activating protease from Rattus norvegicus (Rat).